A 331-amino-acid polypeptide reads, in one-letter code: DNA-directed RNA polymerase subunit alpha (331 aa).

The alpha N-terminal domain (alpha-NTD) stretch occupies residues 1–230 (MKNIKTSPYI…KQMSVFNSEW (230 aa)). An alpha C-terminal domain (alpha-CTD) region spans residues 247–331 (LKPLLQKIEA…ALQKRLNKLK (85 aa)).

The protein belongs to the RNA polymerase alpha chain family. In terms of assembly, homodimer. The RNAP catalytic core consists of 2 alpha, 1 beta/beta' and 1 omega subunit. When a sigma factor is associated with the core the holoenzyme is formed, which can initiate transcription.

It catalyses the reaction RNA(n) + a ribonucleoside 5'-triphosphate = RNA(n+1) + diphosphate. Its function is as follows. DNA-dependent RNA polymerase catalyzes the transcription of DNA into RNA using the four ribonucleoside triphosphates as substrates. The polypeptide is DNA-directed RNA polymerase subunit alpha (Wolinella succinogenes (strain ATCC 29543 / DSM 1740 / CCUG 13145 / JCM 31913 / LMG 7466 / NCTC 11488 / FDC 602W) (Vibrio succinogenes)).